We begin with the raw amino-acid sequence, 457 residues long: Ribosomal protein uS12 methylthiotransferase RimO (457 aa).

The 111-residue stretch at 6 to 116 (PKVGFVSLGC…VMEAVHAALP (111 aa)) folds into the MTTase N-terminal domain. [4Fe-4S] cluster contacts are provided by Cys-15, Cys-51, Cys-80, Cys-147, Cys-151, and Cys-154. Residues 133 to 370 (LTPRHYAYLK…MARQAEISAA (238 aa)) enclose the Radical SAM core domain. A TRAM domain is found at 373-441 (EAKIGSVQQC…EHDLFGDALP (69 aa)).

This sequence belongs to the methylthiotransferase family. RimO subfamily. The cofactor is [4Fe-4S] cluster.

The protein resides in the cytoplasm. It catalyses the reaction L-aspartate(89)-[ribosomal protein uS12]-hydrogen + (sulfur carrier)-SH + AH2 + 2 S-adenosyl-L-methionine = 3-methylsulfanyl-L-aspartate(89)-[ribosomal protein uS12]-hydrogen + (sulfur carrier)-H + 5'-deoxyadenosine + L-methionine + A + S-adenosyl-L-homocysteine + 2 H(+). Catalyzes the methylthiolation of an aspartic acid residue of ribosomal protein uS12. The sequence is that of Ribosomal protein uS12 methylthiotransferase RimO from Xanthomonas campestris pv. campestris (strain 8004).